We begin with the raw amino-acid sequence, 121 residues long: Large ribosomal subunit protein bL12 (121 aa).

This sequence belongs to the bacterial ribosomal protein bL12 family. As to quaternary structure, homodimer. Part of the ribosomal stalk of the 50S ribosomal subunit. Forms a multimeric L10(L12)X complex, where L10 forms an elongated spine to which 2 to 4 L12 dimers bind in a sequential fashion. Binds GTP-bound translation factors.

In terms of biological role, forms part of the ribosomal stalk which helps the ribosome interact with GTP-bound translation factors. Is thus essential for accurate translation. The protein is Large ribosomal subunit protein bL12 of Escherichia coli O45:K1 (strain S88 / ExPEC).